We begin with the raw amino-acid sequence, 623 residues long: tRNA 5-methylaminomethyl-2-thiouridine biosynthesis bifunctional protein MnmC (623 aa).

The tRNA (mnm(5)s(2)U34)-methyltransferase stretch occupies residues 1 to 244; it reads MCVSSSIQTA…KREMLKAIWP (244 aa). The segment at 268-623 is FAD-dependent cmnm(5)s(2)U34 oxidoreductase; the sequence is IGAGIAGLHC…VKIKKPYYSS (356 aa).

It in the N-terminal section; belongs to the methyltransferase superfamily. tRNA (mnm(5)s(2)U34)-methyltransferase family. This sequence in the C-terminal section; belongs to the DAO family. FAD serves as cofactor.

Its subcellular location is the cytoplasm. It catalyses the reaction 5-aminomethyl-2-thiouridine(34) in tRNA + S-adenosyl-L-methionine = 5-methylaminomethyl-2-thiouridine(34) in tRNA + S-adenosyl-L-homocysteine + H(+). Its function is as follows. Catalyzes the last two steps in the biosynthesis of 5-methylaminomethyl-2-thiouridine (mnm(5)s(2)U) at the wobble position (U34) in tRNA. Catalyzes the FAD-dependent demodification of cmnm(5)s(2)U34 to nm(5)s(2)U34, followed by the transfer of a methyl group from S-adenosyl-L-methionine to nm(5)s(2)U34, to form mnm(5)s(2)U34. The protein is tRNA 5-methylaminomethyl-2-thiouridine biosynthesis bifunctional protein MnmC of Acinetobacter baylyi (strain ATCC 33305 / BD413 / ADP1).